The sequence spans 233 residues: MYQRVLVKLSGEVMCGEGSRGFDQSNINYLVQQIAQIVDYGVNVGIVIGAGNIFRGEELSEIPHSLADQIGMLGTVINALYLKGSLQKVGIKCVVVSQVTSLPSIRPIHYDDINLYFDAGYVVIFAGGTSNPFFTTDTAAALRAVEMGANLLIKATKVDGIYDSDPKKNKSARKLDKISYYDAISRGLKVMDMEAFSICGRYKLPIVILNFFEDGSLLRAVRGEDVGSIIMPD.

Residues 8–11 (KLSG), glycine 51, and arginine 55 contribute to the ATP site. UMP contacts are provided by residues aspartate 68 and 129-136 (TSNPFFTT). ATP contacts are provided by threonine 156, tyrosine 162, and aspartate 165.

Belongs to the UMP kinase family. In terms of assembly, homohexamer.

Its subcellular location is the cytoplasm. It catalyses the reaction UMP + ATP = UDP + ADP. It functions in the pathway pyrimidine metabolism; CTP biosynthesis via de novo pathway; UDP from UMP (UMPK route): step 1/1. Inhibited by UTP. Catalyzes the reversible phosphorylation of UMP to UDP. This Pseudothermotoga lettingae (strain ATCC BAA-301 / DSM 14385 / NBRC 107922 / TMO) (Thermotoga lettingae) protein is Uridylate kinase.